Consider the following 293-residue polypeptide: Ribosomal protein L11 methyltransferase (293 aa).

Thr-145, Gly-166, Asp-188, and Asn-230 together coordinate S-adenosyl-L-methionine.

The protein belongs to the methyltransferase superfamily. PrmA family.

The protein resides in the cytoplasm. It carries out the reaction L-lysyl-[protein] + 3 S-adenosyl-L-methionine = N(6),N(6),N(6)-trimethyl-L-lysyl-[protein] + 3 S-adenosyl-L-homocysteine + 3 H(+). Functionally, methylates ribosomal protein L11. This chain is Ribosomal protein L11 methyltransferase, found in Klebsiella pneumoniae (strain 342).